A 527-amino-acid chain; its full sequence is Peptide chain release factor 3 (527 aa).

The region spanning 9-277 (AKRRTFAIIS…AVVNWAPKPL (269 aa)) is the tr-type G domain. GTP contacts are provided by residues 18 to 25 (SHPDAGKT), 86 to 90 (DTPGH), and 140 to 143 (NKLD).

It belongs to the TRAFAC class translation factor GTPase superfamily. Classic translation factor GTPase family. PrfC subfamily.

The protein resides in the cytoplasm. Its function is as follows. Increases the formation of ribosomal termination complexes and stimulates activities of RF-1 and RF-2. It binds guanine nucleotides and has strong preference for UGA stop codons. It may interact directly with the ribosome. The stimulation of RF-1 and RF-2 is significantly reduced by GTP and GDP, but not by GMP. The polypeptide is Peptide chain release factor 3 (Pseudomonas savastanoi pv. phaseolicola (strain 1448A / Race 6) (Pseudomonas syringae pv. phaseolicola (strain 1448A / Race 6))).